The sequence spans 164 residues: Probable Brix domain-containing ribosomal biogenesis protein (164 aa).

Positions 1-164 (MIITTSRKPS…IKTVKILDIE (164 aa)) constitute a Brix domain.

Functionally, probably involved in the biogenesis of the ribosome. The chain is Probable Brix domain-containing ribosomal biogenesis protein from Methanococcus maripaludis (strain DSM 14266 / JCM 13030 / NBRC 101832 / S2 / LL).